We begin with the raw amino-acid sequence, 158 residues long: Transcriptional repressor NrdR (158 aa).

A zinc finger lies at C3–C34. In terms of domain architecture, ATP-cone spans V49–T139.

The protein belongs to the NrdR family. Requires Zn(2+) as cofactor.

Negatively regulates transcription of bacterial ribonucleotide reductase nrd genes and operons by binding to NrdR-boxes. This chain is Transcriptional repressor NrdR, found in Clostridium novyi (strain NT).